A 181-amino-acid chain; its full sequence is Large ribosomal subunit protein uL6 (181 aa).

The protein belongs to the universal ribosomal protein uL6 family. In terms of assembly, part of the 50S ribosomal subunit.

Functionally, this protein binds to the 23S rRNA, and is important in its secondary structure. It is located near the subunit interface in the base of the L7/L12 stalk, and near the tRNA binding site of the peptidyltransferase center. This is Large ribosomal subunit protein uL6 from Hydrogenobaculum sp. (strain Y04AAS1).